Consider the following 133-residue polypeptide: Small heat shock protein ibp (133 aa).

The sHSP domain occupies 11 to 126 (EQPLSENPNY…KPKKISINEE (116 aa)).

Belongs to the small heat shock protein (HSP20) family.

This is Small heat shock protein ibp (ibp) from Wigglesworthia glossinidia brevipalpis.